A 300-amino-acid polypeptide reads, in one-letter code: 33 kDa chaperonin (300 aa).

2 cysteine pairs are disulfide-bonded: Cys-235–Cys-237 and Cys-269–Cys-272.

This sequence belongs to the HSP33 family. In terms of processing, under oxidizing conditions two disulfide bonds are formed involving the reactive cysteines. Under reducing conditions zinc is bound to the reactive cysteines and the protein is inactive.

It is found in the cytoplasm. Redox regulated molecular chaperone. Protects both thermally unfolding and oxidatively damaged proteins from irreversible aggregation. Plays an important role in the bacterial defense system toward oxidative stress. The sequence is that of 33 kDa chaperonin from Pseudomonas syringae pv. tomato (strain ATCC BAA-871 / DC3000).